Reading from the N-terminus, the 166-residue chain is Protein SprT (166 aa).

Residues 19 to 164 form the SprT-like domain; the sequence is RDALARANLK…CVRCGDTLVA (146 aa). Histidine 78 contributes to the Zn(2+) binding site. Glutamate 79 is an active-site residue. Position 82 (histidine 82) interacts with Zn(2+).

The protein belongs to the SprT family. Zn(2+) serves as cofactor.

Its subcellular location is the cytoplasm. This chain is Protein SprT, found in Cronobacter sakazakii (strain ATCC BAA-894) (Enterobacter sakazakii).